Consider the following 521-residue polypeptide: Small ribosomal subunit protein mL104 (rPPR9) (521 aa).

The transit peptide at M1–F59 directs the protein to the mitochondrion. 8 PPR repeats span residues G174–D204, D210–E240, D244–I278, G279–M313, N321–P355, D356–E390, N393–P427, and G428–V462. Basic and acidic residues predominate over residues E480–T495. The segment at E480–K499 is disordered. The short motif at K486–K503 is the Nuclear localization signal element.

Belongs to the PPR family. P subfamily. As to quaternary structure, interacts with NAP1;1 and TCP8. Able to bind mitochondrial RNA in vitro. Component of the mitochondrial ribosome small subunit. As to expression, expressed in root tips, lateral root primordia and leaf primordia. Highly detected in the mature pollen grains.

Its subcellular location is the mitochondrion matrix. It localises to the nucleus. Its function is as follows. RNA-binding protein that functions in both mitochondrion and nucleus. In mitochondrion, it is associated with polysomes and may play a role in translation. Required during embryogenesis. In nucleus, might be involved in the regulation of its own gene expression. The protein is Small ribosomal subunit protein mL104 (rPPR9) (PNM1) of Arabidopsis thaliana (Mouse-ear cress).